Consider the following 221-residue polypeptide: Probable GTP-binding protein EngB (221 aa).

The 174-residue stretch at 32–205 (GIPQIAFAGR…RKIVDSLITT (174 aa)) folds into the EngB-type G domain. Residues 40–47 (GRSNAGKS), 67–71 (GKTKL), 85–88 (DLPG), 152–155 (TKID), and 184–186 (VSN) contribute to the GTP site. Residues Ser47 and Thr69 each coordinate Mg(2+).

The protein belongs to the TRAFAC class TrmE-Era-EngA-EngB-Septin-like GTPase superfamily. EngB GTPase family. Requires Mg(2+) as cofactor.

In terms of biological role, necessary for normal cell division and for the maintenance of normal septation. The chain is Probable GTP-binding protein EngB from Leptospira borgpetersenii serovar Hardjo-bovis (strain JB197).